A 215-amino-acid chain; its full sequence is MNKDQSKIPQATAKRLPLYYRFLKNLHASGKQRVSSAELSDAVKVDSATIRRDFSYFGALGKKGYGYNVDYLLSFFRKTLDQDETTNVILIGVGNLGTAFLHYNFTKNNNTKISMAFDVNQSKIGTEVGGVPVFDLNDLELHIKDEPVAILTVPAVAAQSITDRLVSLGIKGILNFTPARLNVPDHIRIHHIDLAVELQSLVYFLKHYSVLEEIE.

Residues 18–57 constitute a DNA-binding region (H-T-H motif); it reads LYYRFLKNLHASGKQRVSSAELSDAVKVDSATIRRDFSYF. 92–97 provides a ligand contact to NAD(+); sequence GVGNLG.

The protein belongs to the transcriptional regulatory Rex family. As to quaternary structure, homodimer.

Its subcellular location is the cytoplasm. Modulates transcription in response to changes in cellular NADH/NAD(+) redox state. The sequence is that of Redox-sensing transcriptional repressor Rex from Bacillus velezensis (strain DSM 23117 / BGSC 10A6 / LMG 26770 / FZB42) (Bacillus amyloliquefaciens subsp. plantarum).